Here is a 680-residue protein sequence, read N- to C-terminus: DNA-directed RNA polymerase subunit beta' (680 aa).

The Zn(2+) site is built by cysteine 69, cysteine 71, cysteine 87, and cysteine 90. 3 residues coordinate Mg(2+): aspartate 489, aspartate 491, and aspartate 493.

It belongs to the RNA polymerase beta' chain family. RpoC1 subfamily. In terms of assembly, in plastids the minimal PEP RNA polymerase catalytic core is composed of four subunits: alpha, beta, beta', and beta''. When a (nuclear-encoded) sigma factor is associated with the core the holoenzyme is formed, which can initiate transcription. It depends on Mg(2+) as a cofactor. Requires Zn(2+) as cofactor.

It localises to the plastid. It is found in the chloroplast. The catalysed reaction is RNA(n) + a ribonucleoside 5'-triphosphate = RNA(n+1) + diphosphate. Its function is as follows. DNA-dependent RNA polymerase catalyzes the transcription of DNA into RNA using the four ribonucleoside triphosphates as substrates. The polypeptide is DNA-directed RNA polymerase subunit beta' (Citrus sinensis (Sweet orange)).